Here is a 238-residue protein sequence, read N- to C-terminus: Protein A47 (238 aa).

Belongs to the orthopoxvirus A47 protein family.

This is Protein A47 from Vaccinia virus (strain Ankara) (VACV).